The chain runs to 337 residues: HTH-type transcriptional regulator MalR (337 aa).

An HTH lacI-type domain is found at 1 to 56 (MVTIKDIAQAANVSTSTVSRVISGNPRISMQTREKVKATMKSFNYQPNRAARTLAT). Positions 4–23 (IKDIAQAANVSTSTVSRVIS) form a DNA-binding region, H-T-H motif.

Transcriptional repressor of the malA gene for maltase. The chain is HTH-type transcriptional regulator MalR (malR) from Staphylococcus xylosus.